The sequence spans 461 residues: Serine/threonine-protein kinase VHS1 (461 aa).

In terms of domain architecture, Protein kinase spans 12–337 (YLITSQIGEG…KEVSSITSFT (326 aa)). Residues 18-26 (IGEGAYGLV) and lysine 41 each bind ATP. The active-site Proton acceptor is aspartate 185. The tract at residues 384–433 (LSYTSSSEEEDGIKEGIDDDNGSRSGSFGTLDTDTGLHSSFTSTSCESDN) is disordered. Acidic residues predominate over residues 390-403 (SEEEDGIKEGIDDD). A compositionally biased stretch (polar residues) spans 406-433 (SRSGSFGTLDTDTGLHSSFTSTSCESDN).

The protein belongs to the protein kinase superfamily. Ser/Thr protein kinase family.

The protein localises to the cytoplasm. It carries out the reaction L-seryl-[protein] + ATP = O-phospho-L-seryl-[protein] + ADP + H(+). The catalysed reaction is L-threonyl-[protein] + ATP = O-phospho-L-threonyl-[protein] + ADP + H(+). Its function is as follows. Probable serine/threonine protein kinase involved in the G1-S transition. This Saccharomyces cerevisiae (strain ATCC 204508 / S288c) (Baker's yeast) protein is Serine/threonine-protein kinase VHS1 (VHS1).